The chain runs to 222 residues: N-(5'-phosphoribosyl)anthranilate isomerase (222 aa).

This sequence belongs to the TrpF family.

It catalyses the reaction N-(5-phospho-beta-D-ribosyl)anthranilate = 1-(2-carboxyphenylamino)-1-deoxy-D-ribulose 5-phosphate. The protein operates within amino-acid biosynthesis; L-tryptophan biosynthesis; L-tryptophan from chorismate: step 3/5. The protein is N-(5'-phosphoribosyl)anthranilate isomerase of Brucella abortus (strain S19).